Reading from the N-terminus, the 197-residue chain is Probable GTP-binding protein EngB (197 aa).

The region spanning 22–195 (QLPELALAGR…WRTILNHLKV (174 aa)) is the EngB-type G domain. Residues 30-37 (GRSNVGKS), 57-61 (GKTQT), 75-78 (DVPG), 142-145 (TKAD), and 174-176 (FSS) each bind GTP. S37 and T59 together coordinate Mg(2+).

The protein belongs to the TRAFAC class TrmE-Era-EngA-EngB-Septin-like GTPase superfamily. EngB GTPase family. Mg(2+) serves as cofactor.

Functionally, necessary for normal cell division and for the maintenance of normal septation. The polypeptide is Probable GTP-binding protein EngB (Shouchella clausii (strain KSM-K16) (Alkalihalobacillus clausii)).